Reading from the N-terminus, the 677-residue chain is Methionine--tRNA ligase (677 aa).

A 'HIGH' region motif is present at residues 15 to 25; it reads PYANGSIHLGH. Residues Cys146, Cys149, Cys159, and Cys162 each contribute to the Zn(2+) site. Residues 333 to 337 carry the 'KMSKS' region motif; it reads KMSKS. Residue Lys336 coordinates ATP. The region spanning 575 to 677 is the tRNA-binding domain; sequence DFAKVDLRVA…DGAKPGQQVK (103 aa).

It belongs to the class-I aminoacyl-tRNA synthetase family. MetG type 1 subfamily. In terms of assembly, homodimer. Zn(2+) serves as cofactor.

It localises to the cytoplasm. The enzyme catalyses tRNA(Met) + L-methionine + ATP = L-methionyl-tRNA(Met) + AMP + diphosphate. Is required not only for elongation of protein synthesis but also for the initiation of all mRNA translation through initiator tRNA(fMet) aminoacylation. The sequence is that of Methionine--tRNA ligase from Salmonella schwarzengrund (strain CVM19633).